The primary structure comprises 512 residues: Plastidal glycolate/glycerate translocator 1, chloroplastic (512 aa).

The transit peptide at 1 to 76 (MATLLATPIF…MNFERKLSVQ (76 aa)) directs the protein to the chloroplast. At Ala-77 the chain carries N-acetylalanine. The next 12 helical transmembrane spans lie at 93-113 (VIAISHLLVSLGIILAADYFL), 127-147 (ALFGMFCIFSVLMIFDSVVPA), 160-180 (FLFIQRWLPLFYVPSLVVLPL), 195-215 (YIVAGGWLASLCVAGYTAIAV), 238-258 (LELWSWSGIFVVSFVGALFYP), 270-290 (PFLLSSTVLGYIVGSGLPSSI), 293-313 (VFHPIICCALSAVLAALAFGY), 336-356 (AGDILMGFLGSVILSFAFSMF), 367-387 (AEIFTSVIVSTVFSLYSTALV), 398-418 (TVSILPRCITVALALSIVSLF), 425-445 (LTAAVVVVTGLIGANFVQVVL), and 480-500 (LPFCAIAYALTGIFGSLLCSV).

Belongs to the CidB/LrgB family. In terms of tissue distribution, expressed in leaves, stems and flowers, but not in roots.

It is found in the plastid. It localises to the chloroplast membrane. In terms of biological role, glycolate/glycerate transporter required for photorespiration. The polypeptide is Plastidal glycolate/glycerate translocator 1, chloroplastic (PLGG1) (Arabidopsis thaliana (Mouse-ear cress)).